The chain runs to 109 residues: Parvalbumin, muscle (109 aa).

N-acetylalanine is present on alanine 1. EF-hand domains lie at 38-73 (KSPE…FTPD) and 77-109 (LSDK…VAES). 9 residues coordinate Ca(2+): aspartate 51, aspartate 53, serine 55, glutamate 62, aspartate 90, aspartate 92, aspartate 94, lysine 96, and glutamate 101.

Belongs to the parvalbumin family.

Its function is as follows. In muscle, parvalbumin is thought to be involved in relaxation after contraction. It binds two calcium ions. In Gallus gallus (Chicken), this protein is Parvalbumin, muscle.